The sequence spans 521 residues: Cyclic AMP-responsive element-binding protein 3-like protein 2 (521 aa).

Over 1 to 378 (MEVLESGEQS…CKLAGTQTGT (378 aa)) the chain is Cytoplasmic. The span at 83–103 (YSLSEEPRTQSPFTHAATSDS) shows a compositional bias: polar residues. The disordered stretch occupies residues 83 to 106 (YSLSEEPRTQSPFTHAATSDSFND). A Phosphoserine modification is found at S93. A Glycyl lysine isopeptide (Lys-Gly) (interchain with G-Cter in SUMO2) cross-link involves residue K178. The residue at position 191 (S191) is a Phosphoserine. The segment at 196–264 (SVDQLHLPPT…PHKLQGSGPL (69 aa)) is disordered. Positions 208–220 (SSHSSDSEGSLSP) are enriched in low complexity. The bZIP domain occupies 294–357 (ALKKIRRKIK…RTLLQQLQKL (64 aa)). Positions 296 to 325 (KKIRRKIKNKISAQESRRKKKEYMDSLEKK) are basic motif. Residues 336–357 (LRKKVEVLENTNRTLLQQLQKL) are leucine-zipper. Residues 379–399 (CLMVVVLCFAVAFGSFFQGYG) traverse the membrane as a helical; Signal-anchor for type II membrane protein segment. Over 400–521 (PYPSATKMAL…ELERRVNATF (122 aa)) the chain is Lumenal. Positions 427-430 (RNLL) match the S1P recognition motif. N481, N505, and N518 each carry an N-linked (GlcNAc...) asparagine glycan.

It belongs to the bZIP family. ATF subfamily. Binds DNA as a dimer. In terms of processing, upon ER stress, translocated to the Golgi apparatus, where it is processed by regulated intramembrane proteolysis (RIP) to release the cytosol-facing N-terminal transcription factor domain. The cleavage is performed sequentially by site-1 and site-2 proteases (S1P/MBTPS1 and S2P/MBTPS2). Post-translationally, N-glycosylated. Ubiquitinated by HRD1/SYVN1; undergoes 'Lys-48'-linked ubiquitination, followed by rapid proteasomal degradation under normal conditions. Upon ER stress, SYVN1 E3 ubiquitin-protein ligase dissociates from its substrate, ubiquitination does not occur and CREB3L2 is stabilized. Widely expressed, including in lung, bladder, ovary, testis and spleen. Highly expressed in chondrocytes.

Its subcellular location is the endoplasmic reticulum membrane. It localises to the nucleus. Functionally, transcription factor involved in unfolded protein response (UPR). In the absence of endoplasmic reticulum (ER) stress, inserted into ER membranes, with N-terminal DNA-binding and transcription activation domains oriented toward the cytosolic face of the membrane. In response to ER stress, transported to the Golgi, where it is cleaved in a site-specific manner by resident proteases S1P/MBTPS1 and S2P/MBTPS2. The released N-terminal cytosolic domain is translocated to the nucleus to effect transcription of specific target genes. Plays a critical role in chondrogenesis by activating the transcription of SEC23A, which promotes the transport and secretion of cartilage matrix proteins, and possibly that of ER biogenesis-related genes. In a neuroblastoma cell line, protects cells from ER stress-induced death. In vitro activates transcription of target genes via direct binding to the CRE site. This Mus musculus (Mouse) protein is Cyclic AMP-responsive element-binding protein 3-like protein 2 (Creb3l2).